The chain runs to 168 residues: Translationally-controlled tumor protein homolog (168 aa).

The TCTP domain maps to 1-168; that stretch reads MLLYKDVISG…FKDGLVSEKF (168 aa). Ser-78 is subject to Phosphoserine.

It belongs to the TCTP family.

It is found in the cytoplasm. Functionally, involved in calcium binding and microtubule stabilization. May be a guanine nucleotide-free chaperone (GFC). This chain is Translationally-controlled tumor protein homolog (p23fy), found in Schizosaccharomyces pombe (strain 972 / ATCC 24843) (Fission yeast).